Reading from the N-terminus, the 253-residue chain is uncharacterized protein (253 aa).

Residues Ile-17, Ser-36, Asp-62, Asn-89, Tyr-158, Lys-162, Val-191, and Thr-193 each coordinate NADP(+). Catalysis depends on Tyr-158, which acts as the Proton donor. Lys-162 acts as the Lowers pKa of active site Tyr in catalysis.

Belongs to the short-chain dehydrogenases/reductases (SDR) family.

The protein localises to the cytoplasm. It localises to the nucleus. This is an uncharacterized protein from Schizosaccharomyces pombe (strain 972 / ATCC 24843) (Fission yeast).